The chain runs to 140 residues: Ribosome-binding factor A (140 aa).

Belongs to the RbfA family. Monomer. Binds 30S ribosomal subunits, but not 50S ribosomal subunits or 70S ribosomes.

It localises to the cytoplasm. Its function is as follows. One of several proteins that assist in the late maturation steps of the functional core of the 30S ribosomal subunit. Associates with free 30S ribosomal subunits (but not with 30S subunits that are part of 70S ribosomes or polysomes). Required for efficient processing of 16S rRNA. May interact with the 5'-terminal helix region of 16S rRNA. This chain is Ribosome-binding factor A, found in Cereibacter sphaeroides (strain ATCC 17023 / DSM 158 / JCM 6121 / CCUG 31486 / LMG 2827 / NBRC 12203 / NCIMB 8253 / ATH 2.4.1.) (Rhodobacter sphaeroides).